A 352-amino-acid polypeptide reads, in one-letter code: Putative [LysW]-L-2-aminoadipate 6-phosphate reductase (352 aa).

11 to 14 (SGYT) contacts NADP(+). The active site involves Cys-148. Asn-319 contributes to the NADP(+) binding site.

This sequence belongs to the NAGSA dehydrogenase family. Type 1 subfamily. LysY sub-subfamily.

The protein localises to the cytoplasm. The enzyme catalyses [amino-group carrier protein]-C-terminal-N-(1-carboxy-5-oxopentan-1-yl)-L-glutamine + phosphate + NADP(+) = [amino-group carrier protein]-C-terminal-N-(1-carboxy-5-phosphooxy-5-oxopentan-1-yl)-L-glutamine + NADPH + H(+). Its pathway is amino-acid biosynthesis; L-lysine biosynthesis via AAA pathway; L-lysine from L-alpha-aminoadipate (Thermus route): step 3/5. Its function is as follows. Catalyzes the NADPH-dependent reduction of [LysW]-aminoadipate 6-phosphate to yield [LysW]-aminoadipate 6-semialdehyde. The polypeptide is Putative [LysW]-L-2-aminoadipate 6-phosphate reductase (Thermomicrobium roseum (strain ATCC 27502 / DSM 5159 / P-2)).